Consider the following 163-residue polypeptide: Nucleotide-binding protein KPK_4305 (163 aa).

This sequence belongs to the YajQ family.

In terms of biological role, nucleotide-binding protein. The sequence is that of Nucleotide-binding protein KPK_4305 from Klebsiella pneumoniae (strain 342).